Consider the following 448-residue polypeptide: Trigger factor (448 aa).

In terms of domain architecture, PPIase FKBP-type spans 172–257 (GDRVTVDFVG…MKKIEWPHLP (86 aa)).

It belongs to the FKBP-type PPIase family. Tig subfamily.

Its subcellular location is the cytoplasm. It carries out the reaction [protein]-peptidylproline (omega=180) = [protein]-peptidylproline (omega=0). Its function is as follows. Involved in protein export. Acts as a chaperone by maintaining the newly synthesized protein in an open conformation. Functions as a peptidyl-prolyl cis-trans isomerase. The sequence is that of Trigger factor from Burkholderia orbicola (strain MC0-3).